Reading from the N-terminus, the 555-residue chain is Dimethylaniline monooxygenase [N-oxide-forming] 4 (555 aa).

FAD contacts are provided by residues 9–13, Glu32, and 40–41; these read GAGVS and LW. Residues 60–61 and 195–198 each bind NADP(+); these read TN and SGGD. The chain crosses the membrane as a helical span at residues 515-532; that stretch reads YLKVWGAPLLLASVLLIC.

It belongs to the FMO family. FAD is required as a cofactor. In terms of tissue distribution, kidney and liver.

Its subcellular location is the microsome membrane. The protein resides in the endoplasmic reticulum membrane. It carries out the reaction N,N-dimethylaniline + NADPH + O2 + H(+) = N,N-dimethylaniline N-oxide + NADP(+) + H2O. Functionally, this protein is involved in the oxidative metabolism of a variety of xenobiotics such as drugs and pesticides. This chain is Dimethylaniline monooxygenase [N-oxide-forming] 4 (FMO4), found in Oryctolagus cuniculus (Rabbit).